The sequence spans 167 residues: Lipoprotein signal peptidase (167 aa).

3 helical membrane passes run 10–30 (LIWL…KAWV), 68–88 (WQLW…AFWL), and 98–118 (SAVP…DRLM). Residues Asp-124 and Asp-142 contribute to the active site. A helical transmembrane segment spans residues 138-158 (FNIADSAIVGGAIGIALFGLF).

It belongs to the peptidase A8 family.

It localises to the cell inner membrane. The catalysed reaction is Release of signal peptides from bacterial membrane prolipoproteins. Hydrolyzes -Xaa-Yaa-Zaa-|-(S,diacylglyceryl)Cys-, in which Xaa is hydrophobic (preferably Leu), and Yaa (Ala or Ser) and Zaa (Gly or Ala) have small, neutral side chains.. It participates in protein modification; lipoprotein biosynthesis (signal peptide cleavage). Functionally, this protein specifically catalyzes the removal of signal peptides from prolipoproteins. The polypeptide is Lipoprotein signal peptidase (Xanthomonas campestris pv. campestris (strain 8004)).